The primary structure comprises 218 residues: UPF0177 protein YaiF (218 aa).

5 helical membrane-spanning segments follow: residues 8 to 28 (SIIIATAFFLFILSQLPAVFL), 48 to 68 (FIILTLVVVTICIFIGIKCGF), 81 to 101 (ILLIFSLLIITFFIQKFVVQF), 123 to 143 (ILSSLLFPGQFVAVSILAPIL), and 163 to 183 (FFLSCFFFSYVHSGFSWDILG).

It belongs to the UPF0177 family.

The protein localises to the cell membrane. In Lactococcus lactis subsp. lactis (strain IL1403) (Streptococcus lactis), this protein is UPF0177 protein YaiF (yaiF).